A 104-amino-acid polypeptide reads, in one-letter code: Large ribosomal subunit protein bL27 (104 aa).

A propeptide spanning residues 1-15 (MNNKYFLTKIDLQFF) is cleaved from the precursor.

The protein belongs to the bacterial ribosomal protein bL27 family. In terms of processing, the N-terminus is cleaved by ribosomal processing cysteine protease Prp.

This is Large ribosomal subunit protein bL27 from Mycoplasma pneumoniae (strain ATCC 29342 / M129 / Subtype 1) (Mycoplasmoides pneumoniae).